The sequence spans 478 residues: Lysosome membrane protein 2 (478 aa).

Residues 1–4 lie on the Cytoplasmic side of the membrane; sequence MGRC. The chain crosses the membrane as a helical span at residues 5–27; the sequence is CFYTAGTLSLLLLVTSVTLLVAR. At 28–433 the chain is on the lumenal side; that stretch reads VFQKAVDQTI…QLKSVINTTL (406 aa). N-linked (GlcNAc...) asparagine glycans are attached at residues N45, N68, N105, and N122. The interval 155–191 is important for interaction with GBA1; that stretch reads LIEAMLKAYQQKLFVIHTVHELLWGYKDEILSLVHIF. N-linked (GlcNAc...) asparagine glycans are attached at residues N206, N224, N249, and N304. 2 disulfides stabilise this stretch: C274/C329 and C312/C318. Residues N325, N412, and N430 are each glycosylated (N-linked (GlcNAc...) asparagine). Residues 434-459 traverse the membrane as a helical segment; that stretch reads VVTNIPYIIMALGVFFGLVFTWLACR. Residues 460–478 lie on the Cytoplasmic side of the membrane; that stretch reads GQGSMDEGTADERAPLIRT.

The protein belongs to the CD36 family. As to quaternary structure, interacts with GBA1. Acylated by palmitic acid group(s). Post-translationally, heavily glycosylated. Detected in the extracts of brain, heart, lung, liver and kidney.

It localises to the lysosome membrane. Its function is as follows. Acts as a lysosomal receptor for glucosylceramidase (GBA1) targeting. This chain is Lysosome membrane protein 2 (Scarb2), found in Mus musculus (Mouse).